A 252-amino-acid polypeptide reads, in one-letter code: Small ribosomal subunit protein uS3 (252 aa).

The 73-residue stretch at 39–111 folds into the KH type-2 domain; it reads IRKLINNFAK…DVNLNVLEVK (73 aa). Residues 226 to 252 form a disordered region; that stretch reads SQSSNNPNRRPRNFKGGNNNHVNAKKN.

Belongs to the universal ribosomal protein uS3 family. Part of the 30S ribosomal subunit. Forms a tight complex with proteins S10 and S14.

Functionally, binds the lower part of the 30S subunit head. Binds mRNA in the 70S ribosome, positioning it for translation. The protein is Small ribosomal subunit protein uS3 of Aster yellows witches'-broom phytoplasma (strain AYWB).